A 318-amino-acid chain; its full sequence is UAP56-interacting factor (318 aa).

The residue at position 1 (Met1) is an N-acetylmethionine. Positions Met1–Glu25 are disordered. Position 14 is a phosphothreonine (Thr14). Phosphoserine is present on residues Ser16 and Ser23. Positions Asn26 to Glu44 match the UAP56-binding motif motif. Ser61 bears the Phosphoserine mark. Residues Gly79–Gly100 are disordered. Positions Leu85–Pro98 are enriched in basic residues. Phosphoserine is present on Ser118. Lys140 participates in a covalent cross-link: Glycyl lysine isopeptide (Lys-Gly) (interchain with G-Cter in SUMO1). Lys261 participates in a covalent cross-link: Glycyl lysine isopeptide (Lys-Gly) (interchain with G-Cter in SUMO2).

Belongs to the UIF family. Interacts with CHTOP. Interacts with DDX39B/UAP56 and NXF1; interaction with DDX39B/UAP56 and NXF1 are mutually exclusive. Interacts with SSRP1; required for its recruitment to mRNAs. In terms of tissue distribution, expressed in a wide variety of cancer types.

Its subcellular location is the nucleus. The protein resides in the nucleoplasm. The protein localises to the nucleus speckle. Functionally, required for mRNA export from the nucleus to the cytoplasm. Acts as an adapter that uses the DDX39B/UAP56-NFX1 pathway to ensure efficient mRNA export and delivering to the nuclear pore. Associates with spliced and unspliced mRNAs simultaneously with ALYREF/THOC4. The protein is UAP56-interacting factor (FYTTD1) of Homo sapiens (Human).